Consider the following 69-residue polypeptide: Omega-oxotoxin-Ol1a (69 aa).

Residues 1–68 form the Oxytoxin-type inhibitor cystine knot (ICK) domain; the sequence is DWECLPLHSS…GKINTCDKYK (68 aa). 5 disulfides stabilise this stretch: cysteine 4–cysteine 18, cysteine 11–cysteine 23, cysteine 15–cysteine 64, cysteine 17–cysteine 52, and cysteine 25–cysteine 50. The residue at position 69 (asparagine 69) is an Asparagine amide.

The protein belongs to the spiderine family. Spiderine subfamily. Expressed by the venom gland.

It is found in the secreted. Functionally, weak blocker of vertebrate P/Q-, N- and L-type voltage-gated calcium channels (Cav1 and Cav2). Is both paralytic and lethal when injected into lepidopteran larvae. Is not toxic to mice. The protein is Omega-oxotoxin-Ol1a of Oxyopes lineatus (Lynx spider).